The following is a 597-amino-acid chain: Elongation factor 4 (597 aa).

Positions 2 to 184 (QHIRNFSIIA…AIVARVPSPE (183 aa)) constitute a tr-type G domain. Residues 14–19 (DHGKST) and 131–134 (NKMD) contribute to the GTP site.

The protein belongs to the TRAFAC class translation factor GTPase superfamily. Classic translation factor GTPase family. LepA subfamily.

It localises to the cell inner membrane. The catalysed reaction is GTP + H2O = GDP + phosphate + H(+). In terms of biological role, required for accurate and efficient protein synthesis under certain stress conditions. May act as a fidelity factor of the translation reaction, by catalyzing a one-codon backward translocation of tRNAs on improperly translocated ribosomes. Back-translocation proceeds from a post-translocation (POST) complex to a pre-translocation (PRE) complex, thus giving elongation factor G a second chance to translocate the tRNAs correctly. Binds to ribosomes in a GTP-dependent manner. This is Elongation factor 4 from Bordetella avium (strain 197N).